Reading from the N-terminus, the 349-residue chain is Probable dual-specificity RNA methyltransferase RlmN (349 aa).

Residue E93 is the Proton acceptor of the active site. The 231-residue stretch at 99–329 (YKHGNTICVS…TTIRREMGSD (231 aa)) folds into the Radical SAM core domain. Cysteines 106 and 334 form a disulfide. The [4Fe-4S] cluster site is built by C113, C117, and C120. Residues 160-161 (GE), S192, 215-217 (SLH), and N291 each bind S-adenosyl-L-methionine. C334 serves as the catalytic S-methylcysteine intermediate.

The protein belongs to the radical SAM superfamily. RlmN family. The cofactor is [4Fe-4S] cluster.

The protein resides in the cytoplasm. The enzyme catalyses adenosine(2503) in 23S rRNA + 2 reduced [2Fe-2S]-[ferredoxin] + 2 S-adenosyl-L-methionine = 2-methyladenosine(2503) in 23S rRNA + 5'-deoxyadenosine + L-methionine + 2 oxidized [2Fe-2S]-[ferredoxin] + S-adenosyl-L-homocysteine. It catalyses the reaction adenosine(37) in tRNA + 2 reduced [2Fe-2S]-[ferredoxin] + 2 S-adenosyl-L-methionine = 2-methyladenosine(37) in tRNA + 5'-deoxyadenosine + L-methionine + 2 oxidized [2Fe-2S]-[ferredoxin] + S-adenosyl-L-homocysteine. Its function is as follows. Specifically methylates position 2 of adenine 2503 in 23S rRNA and position 2 of adenine 37 in tRNAs. In Clostridium tetani (strain Massachusetts / E88), this protein is Probable dual-specificity RNA methyltransferase RlmN.